We begin with the raw amino-acid sequence, 388 residues long: LL-diaminopimelate aminotransferase (388 aa).

Residues tyrosine 13, glycine 38, lysine 102, tyrosine 126, and asparagine 176 each coordinate substrate. Residues 101 to 102 (SK), tyrosine 126, asparagine 176, tyrosine 207, and 235 to 237 (SLS) contribute to the pyridoxal 5'-phosphate site. Lysine 238 carries the post-translational modification N6-(pyridoxal phosphate)lysine. Arginine 246 contributes to the pyridoxal 5'-phosphate binding site. Arginine 364 is a substrate binding site.

The protein belongs to the class-I pyridoxal-phosphate-dependent aminotransferase family. LL-diaminopimelate aminotransferase subfamily. As to quaternary structure, homodimer. It depends on pyridoxal 5'-phosphate as a cofactor.

The enzyme catalyses (2S,6S)-2,6-diaminopimelate + 2-oxoglutarate = (S)-2,3,4,5-tetrahydrodipicolinate + L-glutamate + H2O + H(+). It participates in amino-acid biosynthesis; L-lysine biosynthesis via DAP pathway; LL-2,6-diaminopimelate from (S)-tetrahydrodipicolinate (aminotransferase route): step 1/1. In terms of biological role, involved in the synthesis of meso-diaminopimelate (m-DAP or DL-DAP), required for both lysine and peptidoglycan biosynthesis. Catalyzes the direct conversion of tetrahydrodipicolinate to LL-diaminopimelate. This is LL-diaminopimelate aminotransferase from Dehalococcoides mccartyi (strain CBDB1).